We begin with the raw amino-acid sequence, 130 residues long: S-adenosylmethionine decarboxylase proenzyme (130 aa).

Ser63 serves as the catalytic Schiff-base intermediate with substrate; via pyruvic acid. Ser63 carries the pyruvic acid (Ser); by autocatalysis modification. The active-site Proton acceptor; for processing activity is His68. The active-site Proton donor; for catalytic activity is Cys83.

Belongs to the prokaryotic AdoMetDC family. Type 1 subfamily. As to quaternary structure, heterotetramer of two alpha and two beta chains arranged as a dimer of alpha/beta heterodimers. Requires pyruvate as cofactor. Is synthesized initially as an inactive proenzyme. Formation of the active enzyme involves a self-maturation process in which the active site pyruvoyl group is generated from an internal serine residue via an autocatalytic post-translational modification. Two non-identical subunits are generated from the proenzyme in this reaction, and the pyruvate is formed at the N-terminus of the alpha chain, which is derived from the carboxyl end of the proenzyme. The post-translation cleavage follows an unusual pathway, termed non-hydrolytic serinolysis, in which the side chain hydroxyl group of the serine supplies its oxygen atom to form the C-terminus of the beta chain, while the remainder of the serine residue undergoes an oxidative deamination to produce ammonia and the pyruvoyl group blocking the N-terminus of the alpha chain.

It carries out the reaction S-adenosyl-L-methionine + H(+) = S-adenosyl 3-(methylsulfanyl)propylamine + CO2. It participates in amine and polyamine biosynthesis; S-adenosylmethioninamine biosynthesis; S-adenosylmethioninamine from S-adenosyl-L-methionine: step 1/1. Catalyzes the decarboxylation of S-adenosylmethionine to S-adenosylmethioninamine (dcAdoMet), the propylamine donor required for the synthesis of the polyamines spermine and spermidine from the diamine putrescine. This chain is S-adenosylmethionine decarboxylase proenzyme, found in Thermosipho africanus (strain TCF52B).